The primary structure comprises 233 residues: Aspartate/glutamate leucyltransferase (233 aa).

This sequence belongs to the R-transferase family. Bpt subfamily.

It is found in the cytoplasm. The catalysed reaction is N-terminal L-glutamyl-[protein] + L-leucyl-tRNA(Leu) = N-terminal L-leucyl-L-glutamyl-[protein] + tRNA(Leu) + H(+). The enzyme catalyses N-terminal L-aspartyl-[protein] + L-leucyl-tRNA(Leu) = N-terminal L-leucyl-L-aspartyl-[protein] + tRNA(Leu) + H(+). Its function is as follows. Functions in the N-end rule pathway of protein degradation where it conjugates Leu from its aminoacyl-tRNA to the N-termini of proteins containing an N-terminal aspartate or glutamate. The protein is Aspartate/glutamate leucyltransferase of Vibrio cholerae serotype O1 (strain ATCC 39541 / Classical Ogawa 395 / O395).